A 436-amino-acid polypeptide reads, in one-letter code: 3-ketoacyl-CoA thiolase (436 aa).

The active-site Acyl-thioester intermediate is Cys-99. Catalysis depends on proton acceptor residues His-392 and Cys-422.

It belongs to the thiolase-like superfamily. Thiolase family. As to quaternary structure, heterotetramer of two alpha chains (FadJ) and two beta chains (FadI).

Its subcellular location is the cytoplasm. It carries out the reaction an acyl-CoA + acetyl-CoA = a 3-oxoacyl-CoA + CoA. The protein operates within lipid metabolism; fatty acid beta-oxidation. In terms of biological role, catalyzes the final step of fatty acid oxidation in which acetyl-CoA is released and the CoA ester of a fatty acid two carbons shorter is formed. This Salmonella choleraesuis (strain SC-B67) protein is 3-ketoacyl-CoA thiolase.